The chain runs to 397 residues: Phosphoglycerate kinase (397 aa).

Residues 21 to 23, arginine 36, 59 to 62, arginine 119, and arginine 156 contribute to the substrate site; these read DFN and HLGR. ATP is bound by residues lysine 207, glycine 295, glutamate 326, and 353–356; that span reads GGDS.

This sequence belongs to the phosphoglycerate kinase family. Monomer.

It is found in the cytoplasm. The catalysed reaction is (2R)-3-phosphoglycerate + ATP = (2R)-3-phospho-glyceroyl phosphate + ADP. It participates in carbohydrate degradation; glycolysis; pyruvate from D-glyceraldehyde 3-phosphate: step 2/5. The protein is Phosphoglycerate kinase of Enterococcus faecalis (strain ATCC 700802 / V583).